Here is a 516-residue protein sequence, read N- to C-terminus: Oxysterol-binding protein-like protein 1 (516 aa).

2 disordered regions span residues 168 to 240 (PLGK…SQKS) and 459 to 501 (KQEI…EEGK). Residues 178–187 (SRTTSSQSVA) are compositionally biased toward polar residues. Position 182 is a phosphoserine (Ser182). Positions 197–206 (TSKKKSSKKN) are enriched in basic residues. Positions 218 to 238 (DRSSTAPSTAESNNEHLSSSQ) are enriched in polar residues.

It belongs to the OSBP family.

Its subcellular location is the endoplasmic reticulum. The protein is Oxysterol-binding protein-like protein 1 (obp1) of Schizosaccharomyces pombe (strain 972 / ATCC 24843) (Fission yeast).